We begin with the raw amino-acid sequence, 209 residues long: Thiamine-phosphate synthase (209 aa).

4-amino-2-methyl-5-(diphosphooxymethyl)pyrimidine contacts are provided by residues 38 to 42 and Asn-70; that span reads QLREK. The Mg(2+) site is built by Asp-71 and Asp-90. Ser-109 contacts 4-amino-2-methyl-5-(diphosphooxymethyl)pyrimidine. 135 to 137 is a 2-[(2R,5Z)-2-carboxy-4-methylthiazol-5(2H)-ylidene]ethyl phosphate binding site; sequence TPT. Lys-138 contributes to the 4-amino-2-methyl-5-(diphosphooxymethyl)pyrimidine binding site. 2-[(2R,5Z)-2-carboxy-4-methylthiazol-5(2H)-ylidene]ethyl phosphate is bound by residues Gly-166 and 186–187; that span reads IS.

Belongs to the thiamine-phosphate synthase family. The cofactor is Mg(2+).

The enzyme catalyses 2-[(2R,5Z)-2-carboxy-4-methylthiazol-5(2H)-ylidene]ethyl phosphate + 4-amino-2-methyl-5-(diphosphooxymethyl)pyrimidine + 2 H(+) = thiamine phosphate + CO2 + diphosphate. It carries out the reaction 2-(2-carboxy-4-methylthiazol-5-yl)ethyl phosphate + 4-amino-2-methyl-5-(diphosphooxymethyl)pyrimidine + 2 H(+) = thiamine phosphate + CO2 + diphosphate. It catalyses the reaction 4-methyl-5-(2-phosphooxyethyl)-thiazole + 4-amino-2-methyl-5-(diphosphooxymethyl)pyrimidine + H(+) = thiamine phosphate + diphosphate. It participates in cofactor biosynthesis; thiamine diphosphate biosynthesis; thiamine phosphate from 4-amino-2-methyl-5-diphosphomethylpyrimidine and 4-methyl-5-(2-phosphoethyl)-thiazole: step 1/1. Functionally, condenses 4-methyl-5-(beta-hydroxyethyl)thiazole monophosphate (THZ-P) and 2-methyl-4-amino-5-hydroxymethyl pyrimidine pyrophosphate (HMP-PP) to form thiamine monophosphate (TMP). The sequence is that of Thiamine-phosphate synthase from Syntrophomonas wolfei subsp. wolfei (strain DSM 2245B / Goettingen).